A 305-amino-acid polypeptide reads, in one-letter code: Putative ankyrin repeat protein RF_0580 (305 aa).

ANK repeat units follow at residues 5-34 (YNKN…NIDE), 39-68 (RGET…SPNI), 72-101 (SGQT…NIDL), 107-136 (CGHS…DINS), 140-169 (FGAS…DVNA), 173-202 (YEDT…DVNI), and 206-235 (NNFT…TIKI).

The chain is Putative ankyrin repeat protein RF_0580 from Rickettsia felis (strain ATCC VR-1525 / URRWXCal2) (Rickettsia azadi).